The sequence spans 430 residues: tRNA(Ile)-lysidine synthase (430 aa).

24–29 (SGGLDS) lines the ATP pocket.

Belongs to the tRNA(Ile)-lysidine synthase family.

It localises to the cytoplasm. It catalyses the reaction cytidine(34) in tRNA(Ile2) + L-lysine + ATP = lysidine(34) in tRNA(Ile2) + AMP + diphosphate + H(+). Its function is as follows. Ligates lysine onto the cytidine present at position 34 of the AUA codon-specific tRNA(Ile) that contains the anticodon CAU, in an ATP-dependent manner. Cytidine is converted to lysidine, thus changing the amino acid specificity of the tRNA from methionine to isoleucine. In Haemophilus influenzae (strain PittEE), this protein is tRNA(Ile)-lysidine synthase.